The primary structure comprises 118 residues: Small ribosomal subunit protein uS13 (118 aa).

Residues 94–118 (GLPVRGQRTKTNARTRKGPRKPIRK) are disordered.

Belongs to the universal ribosomal protein uS13 family. As to quaternary structure, part of the 30S ribosomal subunit. Forms a loose heterodimer with protein S19. Forms two bridges to the 50S subunit in the 70S ribosome.

Its function is as follows. Located at the top of the head of the 30S subunit, it contacts several helices of the 16S rRNA. In the 70S ribosome it contacts the 23S rRNA (bridge B1a) and protein L5 of the 50S subunit (bridge B1b), connecting the 2 subunits; these bridges are implicated in subunit movement. Contacts the tRNAs in the A and P-sites. In Pseudomonas aeruginosa (strain LESB58), this protein is Small ribosomal subunit protein uS13.